We begin with the raw amino-acid sequence, 420 residues long: Ribosome biogenesis protein WDR12 homolog (420 aa).

The segment at 10–92 (VQVHLKTKQE…EDAIEIEYVE (83 aa)) is ubiquitin-like (UBL) domain. WD repeat units follow at residues 104–142 (LHDDWVSAVKARGKWILSGCYDNSLNLWTNKGKHILTIS), 143–185 (GHTA…NAVD), 192–231 (GHERGVDSVSVSPDGLRFATGSWDTMLKVWSAELDDGVEG), 250–288 (GHRESVSAVQWMDATTLLTGSWDYTLKVWDLSLEGIKTE), 290–329 (STNKSIFDASYSKLNRLILTASADKNLRLYDPRTNQGSVV), 335–375 (GHNA…APLY), and 379–417 (GHGDKVLDIDWSNPKYIVSGGVDNTVRVFKSRKALAEDT).

This sequence belongs to the WD repeat WDR12/YTM1 family.

The protein resides in the nucleus. Its subcellular location is the nucleolus. It localises to the nucleoplasm. Required for maturation of ribosomal RNAs and formation of the large ribosomal subunit. In Drosophila sechellia (Fruit fly), this protein is Ribosome biogenesis protein WDR12 homolog.